A 944-amino-acid polypeptide reads, in one-letter code: MERAMEQLNRLTRSLRRARTVELPEDNETAVYTLMPMVMADQHRSVLELLSNSKFDVNYAFGRVKRSLLHIAANCGSVECLVLLLKRGADPNYQDISGCTPLHLAARNGQKKCMSKLLEYNADVNICNNEGLTAIHWLAVNGRTELLHDLVQHVTNVDVEDAMGQTALHVACQNGHKTTVLCLLDSGADINRPNVSGATPLYFACSHGQRDTAQILLLRGAKYLPDKNGVTPLDLCVQGGYGETCDILIQHHPRLFQTLIQMTQNEELRENMLRQVLEHLSQQSEVQYLKILTGLAEVATTNGHKLLSISSSYEAQMKSLLRIVRIFCHVFRIGPSSPNNGNDMGYNGNKTPRNQVFKVRNVSDVFRKINIKEMNLPKHTLIYQATSEQDPLELLWHSLDEWLVLIATELTKNKRDSSNIACILLKQSPLDQQDISLAHQSAIGESGNHDHLLASTRAGDLESCSAIGIQEPVADGQDVISMTANRLSAVIQAFYMCCSCQMPQGMTSPRFIEFVCKHDEVLKCFVTRNPKIIFDHFHFLLECPELMSRFMHIIKAQPFKERCEWFYEHLLAGQPDTDMVHRPVNENDILLVHRDSIFRSSCEVVFKSNCEKLKQGIAVRFHGEEGMGQGVVREWFDILSSEMINPDYALFTQSADGTTFQPNSNSSVNPDHLNYFRFAGEILGLALYHRQLVNIYFTRSFYKHILGIPVNYQDVASIDPEYAKNLQWILDNDISDLGLELTFSVETDVFGAMEEVPLKPGGASILVTQENKAEYVQLVTELRMTRAIQPQINGFLQGFHMFIPPSLIQLFDEYELELLLSGMPEIDVNDWMKNTEYTSGYERDDQVIQWFWEVVQELTQEERVLLLQFVTGSSRVPHGGFAYIMGGSGLQNFTIAAVAYTANLLPTSSTCINMLKLPEYPSKEILKDRLLVALHCGSYGYTMA.

ANK repeat units follow at residues 23 to 55, 64 to 93, 97 to 126, 130 to 159, 163 to 192, 196 to 226, and 228 to 253; these read LPED…NSKF, VKRS…DPNY, SGCT…DVNI, EGLT…NVDV, MGQT…DINR, SGAT…YLPD, and NGVT…QHHP. The region spanning 609–944 is the HECT domain; it reads NCEKLKQGIA…HCGSYGYTMA (336 aa). C911 acts as the Glycyl thioester intermediate in catalysis.

It is found in the golgi apparatus. The protein localises to the golgi stack membrane. It localises to the cytoplasm. The protein resides in the endoplasmic reticulum. The enzyme catalyses S-ubiquitinyl-[E2 ubiquitin-conjugating enzyme]-L-cysteine + [acceptor protein]-L-lysine = [E2 ubiquitin-conjugating enzyme]-L-cysteine + N(6)-ubiquitinyl-[acceptor protein]-L-lysine.. It functions in the pathway protein modification; protein ubiquitination. Functionally, E3 ubiquitin-protein ligase involved in Golgi membrane fusion and regulation of small GTPases. Acts as a regulator of Golgi membrane dynamics during the cell cycle: recruited to Golgi membrane by Rab proteins and regulates postmitotic Golgi membrane fusion. Acts by mediating ubiquitination during mitotic Golgi disassembly, ubiquitination serving as a signal for Golgi reassembly later, after cell division. The protein is E3 ubiquitin-protein ligase HACE1 (hace1) of Xenopus laevis (African clawed frog).